A 374-amino-acid chain; its full sequence is DNA-directed RNA polymerase subunit alpha (374 aa).

Positions methionine 1–aspartate 270 are alpha N-terminal domain (alpha-NTD). Residues lysine 282–glutamate 374 are alpha C-terminal domain (alpha-CTD).

Belongs to the RNA polymerase alpha chain family. As to quaternary structure, homodimer. The RNAP catalytic core consists of 2 alpha, 1 beta, 1 beta' and 1 omega subunit. When a sigma factor is associated with the core the holoenzyme is formed, which can initiate transcription.

The enzyme catalyses RNA(n) + a ribonucleoside 5'-triphosphate = RNA(n+1) + diphosphate. Functionally, DNA-dependent RNA polymerase catalyzes the transcription of DNA into RNA using the four ribonucleoside triphosphates as substrates. This is DNA-directed RNA polymerase subunit alpha from Ehrlichia ruminantium (strain Welgevonden).